Reading from the N-terminus, the 227-residue chain is NADH-quinone oxidoreductase subunit C (227 aa).

This sequence belongs to the complex I 30 kDa subunit family. In terms of assembly, NDH-1 is composed of 14 different subunits. Subunits NuoB, C, D, E, F, and G constitute the peripheral sector of the complex.

It localises to the cell inner membrane. The enzyme catalyses a quinone + NADH + 5 H(+)(in) = a quinol + NAD(+) + 4 H(+)(out). NDH-1 shuttles electrons from NADH, via FMN and iron-sulfur (Fe-S) centers, to quinones in the respiratory chain. The immediate electron acceptor for the enzyme in this species is believed to be ubiquinone. Couples the redox reaction to proton translocation (for every two electrons transferred, four hydrogen ions are translocated across the cytoplasmic membrane), and thus conserves the redox energy in a proton gradient. This chain is NADH-quinone oxidoreductase subunit C, found in Legionella pneumophila (strain Corby).